The following is a 293-amino-acid chain: Ribosomal RNA small subunit methyltransferase H (293 aa).

Residues 32–34 (GGH), Asp-51, Phe-78, Asp-99, and Gln-106 each bind S-adenosyl-L-methionine. The interval 271-293 (PGTEEIRENPPSRSAKLRVAKRI) is disordered.

It belongs to the methyltransferase superfamily. RsmH family.

It is found in the cytoplasm. It catalyses the reaction cytidine(1402) in 16S rRNA + S-adenosyl-L-methionine = N(4)-methylcytidine(1402) in 16S rRNA + S-adenosyl-L-homocysteine + H(+). Its function is as follows. Specifically methylates the N4 position of cytidine in position 1402 (C1402) of 16S rRNA. The chain is Ribosomal RNA small subunit methyltransferase H from Persephonella marina (strain DSM 14350 / EX-H1).